Consider the following 389-residue polypeptide: Phosphopentomutase (389 aa).

The Mn(2+) site is built by Asp9, Asp282, His287, Asp323, His324, and His335.

Belongs to the phosphopentomutase family. Mn(2+) is required as a cofactor.

It is found in the cytoplasm. The enzyme catalyses 2-deoxy-alpha-D-ribose 1-phosphate = 2-deoxy-D-ribose 5-phosphate. It carries out the reaction alpha-D-ribose 1-phosphate = D-ribose 5-phosphate. The protein operates within carbohydrate degradation; 2-deoxy-D-ribose 1-phosphate degradation; D-glyceraldehyde 3-phosphate and acetaldehyde from 2-deoxy-alpha-D-ribose 1-phosphate: step 1/2. Isomerase that catalyzes the conversion of deoxy-ribose 1-phosphate (dRib-1-P) and ribose 1-phosphate (Rib-1-P) to deoxy-ribose 5-phosphate (dRib-5-P) and ribose 5-phosphate (Rib-5-P), respectively. In Kosmotoga olearia (strain ATCC BAA-1733 / DSM 21960 / TBF 19.5.1), this protein is Phosphopentomutase.